We begin with the raw amino-acid sequence, 327 residues long: DNA-directed RNA polymerase subunit alpha (327 aa).

Residues 1–233 (MQNVLKSFLT…HQLAAFVDLK (233 aa)) are alpha N-terminal domain (alpha-NTD). Residues 247-327 (VNPLLLRPVE…GWPPADLTDQ (81 aa)) form an alpha C-terminal domain (alpha-CTD) region.

It belongs to the RNA polymerase alpha chain family. In terms of assembly, homodimer. The RNAP catalytic core consists of 2 alpha, 1 beta, 1 beta' and 1 omega subunit. When a sigma factor is associated with the core the holoenzyme is formed, which can initiate transcription.

The catalysed reaction is RNA(n) + a ribonucleoside 5'-triphosphate = RNA(n+1) + diphosphate. In terms of biological role, DNA-dependent RNA polymerase catalyzes the transcription of DNA into RNA using the four ribonucleoside triphosphates as substrates. In Coxiella burnetii (strain CbuK_Q154) (Coxiella burnetii (strain Q154)), this protein is DNA-directed RNA polymerase subunit alpha.